The primary structure comprises 439 residues: DNA primase DnaG (439 aa).

In terms of domain architecture, Toprim spans 169-243; it reads DSIIVVEGRA…DIDYVARAPY (75 aa). Mg(2+)-binding residues include Glu-175, Asp-217, and Asp-219.

The protein belongs to the archaeal DnaG primase family. As to quaternary structure, forms a ternary complex with MCM helicase and DNA. The cofactor is Mg(2+).

It carries out the reaction ssDNA + n NTP = ssDNA/pppN(pN)n-1 hybrid + (n-1) diphosphate.. In terms of biological role, RNA polymerase that catalyzes the synthesis of short RNA molecules used as primers for DNA polymerase during DNA replication. The polypeptide is DNA primase DnaG (Methanococcus maripaludis (strain C7 / ATCC BAA-1331)).